The chain runs to 257 residues: Global transcriptional regulator CodY (257 aa).

A GAF domain region spans residues 1-155; the sequence is MSLLSKTREL…AATVLGMEIL (155 aa). A DNA-binding region (H-T-H motif) is located at residues 203–222; it reads ASKVADRVGITRSVIVNALR.

The protein belongs to the CodY family.

The protein localises to the cytoplasm. In terms of biological role, DNA-binding global transcriptional regulator which is involved in the adaptive response to starvation and acts by directly or indirectly controlling the expression of numerous genes in response to nutrient availability. During rapid exponential growth, CodY is highly active and represses genes whose products allow adaptation to nutrient depletion. The polypeptide is Global transcriptional regulator CodY (Staphylococcus carnosus (strain TM300)).